The chain runs to 215 residues: Adenylate kinase (215 aa).

10–15 (GAGKGT) contributes to the ATP binding site. The NMP stretch occupies residues 30-59 (STGDILRANVREGTELGLAAKEYMDKGELV). AMP is bound by residues Thr-31, Arg-36, 57–59 (ELV), 85–88 (GYPR), and Gln-92. The tract at residues 126-162 (GRLMCNCGASYHRTFNPPKKDDVCDICGGKVFQRADD) is LID. Residue Arg-127 coordinates ATP. Residues Cys-130 and Cys-132 each contribute to the Zn(2+) site. Position 135 to 136 (135 to 136 (SY)) interacts with ATP. The Zn(2+) site is built by Cys-149 and Cys-152. Residues Arg-159 and Arg-170 each contribute to the AMP site. Lys-198 lines the ATP pocket.

The protein belongs to the adenylate kinase family. In terms of assembly, monomer.

It is found in the cytoplasm. It catalyses the reaction AMP + ATP = 2 ADP. It participates in purine metabolism; AMP biosynthesis via salvage pathway; AMP from ADP: step 1/1. Its function is as follows. Catalyzes the reversible transfer of the terminal phosphate group between ATP and AMP. Plays an important role in cellular energy homeostasis and in adenine nucleotide metabolism. The polypeptide is Adenylate kinase (Methanosarcina barkeri (strain Fusaro / DSM 804)).